Consider the following 340-residue polypeptide: Zinc finger protein 367 (340 aa).

A disordered region spans residues 96-140 (LPTLRGAPPSSASVAAVSGGEDEEEASSPDSGHLKDGIRRGRPRA). Low complexity predominate over residues 101-114 (GAPPSSASVAAVSG). A compositionally biased stretch (basic and acidic residues) spans 127–140 (GHLKDGIRRGRPRA). C2H2-type zinc fingers lie at residues 157–179 (IRCN…KRTH) and 185–209 (YLCD…QRLH). Residues 280 to 317 (KGKLVQKADQEQQDPLEYLQSDEEDDEKSGAQRRLQEQ) are disordered. A coiled-coil region spans residues 299–332 (QSDEEDDEKSGAQRRLQEQRERLHGALALIELAN). Ser-300 is modified (phosphoserine). Basic and acidic residues predominate over residues 307–317 (KSGAQRRLQEQ).

Belongs to the krueppel C2H2-type zinc-finger protein family.

It localises to the nucleus. In terms of biological role, transcriptional activator. May be involved in transcriptional activation of erythroid genes. The protein is Zinc finger protein 367 (Znf367) of Rattus norvegicus (Rat).